A 473-amino-acid chain; its full sequence is Photosystem II CP43 reaction center protein (473 aa).

A propeptide spanning residues 1 to 14 is cleaved from the precursor; sequence MKILYSPRRFYPVE. An N-acetylthreonine modification is found at Thr15. The residue at position 15 (Thr15) is a Phosphothreonine. The next 5 helical transmembrane spans lie at 69–93, 134–155, 178–200, 255–275, and 291–312; these read LFEV…PHLA, IIGP…KDKN, KALY…RKIT, KPFA…LSYS, and WFNN…ASQA. Glu367 provides a ligand contact to [CaMn4O5] cluster. Residues 447 to 471 form a helical membrane-spanning segment; it reads RARAAAAGFEKGIDRDFEPVLSTTP.

It belongs to the PsbB/PsbC family. PsbC subfamily. In terms of assembly, PSII is composed of 1 copy each of membrane proteins PsbA, PsbB, PsbC, PsbD, PsbE, PsbF, PsbH, PsbI, PsbJ, PsbK, PsbL, PsbM, PsbT, PsbX, PsbY, PsbZ, Psb30/Ycf12, at least 3 peripheral proteins of the oxygen-evolving complex and a large number of cofactors. It forms dimeric complexes. It depends on Binds multiple chlorophylls and provides some of the ligands for the Ca-4Mn-5O cluster of the oxygen-evolving complex. It may also provide a ligand for a Cl- that is required for oxygen evolution. PSII binds additional chlorophylls, carotenoids and specific lipids. as a cofactor.

The protein resides in the plastid. It is found in the chloroplast thylakoid membrane. Functionally, one of the components of the core complex of photosystem II (PSII). It binds chlorophyll and helps catalyze the primary light-induced photochemical processes of PSII. PSII is a light-driven water:plastoquinone oxidoreductase, using light energy to abstract electrons from H(2)O, generating O(2) and a proton gradient subsequently used for ATP formation. The polypeptide is Photosystem II CP43 reaction center protein (Huperzia lucidula (Shining clubmoss)).